A 330-amino-acid chain; its full sequence is 4-hydroxythreonine-4-phosphate dehydrogenase (330 aa).

Residues H136 and T137 each contribute to the substrate site. Residues H166, H211, and H266 each contribute to the a divalent metal cation site. K274, N283, and R292 together coordinate substrate.

It belongs to the PdxA family. Homodimer. Zn(2+) is required as a cofactor. It depends on Mg(2+) as a cofactor. The cofactor is Co(2+).

It localises to the cytoplasm. The catalysed reaction is 4-(phosphooxy)-L-threonine + NAD(+) = 3-amino-2-oxopropyl phosphate + CO2 + NADH. The protein operates within cofactor biosynthesis; pyridoxine 5'-phosphate biosynthesis; pyridoxine 5'-phosphate from D-erythrose 4-phosphate: step 4/5. In terms of biological role, catalyzes the NAD(P)-dependent oxidation of 4-(phosphooxy)-L-threonine (HTP) into 2-amino-3-oxo-4-(phosphooxy)butyric acid which spontaneously decarboxylates to form 3-amino-2-oxopropyl phosphate (AHAP). The polypeptide is 4-hydroxythreonine-4-phosphate dehydrogenase (Serratia proteamaculans (strain 568)).